A 161-amino-acid chain; its full sequence is Cytochrome b6-f complex subunit 4 (161 aa).

The next 3 membrane-spanning stretches (helical) occupy residues 37–57, 96–116, and 132–152; these read LLYI…GLAV, LLGV…PFIE, and SVFL…TLPI.

It belongs to the cytochrome b family. PetD subfamily. The 4 large subunits of the cytochrome b6-f complex are cytochrome b6, subunit IV (17 kDa polypeptide, PetD), cytochrome f and the Rieske protein, while the 4 small subunits are PetG, PetL, PetM and PetN. The complex functions as a dimer.

It is found in the cellular thylakoid membrane. Functionally, component of the cytochrome b6-f complex, which mediates electron transfer between photosystem II (PSII) and photosystem I (PSI), cyclic electron flow around PSI, and state transitions. The protein is Cytochrome b6-f complex subunit 4 of Acaryochloris marina (strain MBIC 11017).